The following is a 323-amino-acid chain: HPr kinase/phosphorylase (323 aa).

Catalysis depends on residues His-146 and Lys-167. 161-168 (GESGLGKS) lines the ATP pocket. Ser-168 provides a ligand contact to Mg(2+). Catalysis depends on Asp-185, which acts as the Proton acceptor; for phosphorylation activity. Proton donor; for dephosphorylation activity. The tract at residues 209–218 (LEVRGLGLLD) is important for the catalytic mechanism of both phosphorylation and dephosphorylation. Glu-210 serves as a coordination point for Mg(2+). Arg-250 is a catalytic residue. An important for the catalytic mechanism of dephosphorylation region spans residues 271-276 (QVAAGR).

It belongs to the HPrK/P family. In terms of assembly, homohexamer. The cofactor is Mg(2+).

It catalyses the reaction [HPr protein]-L-serine + ATP = [HPr protein]-O-phospho-L-serine + ADP + H(+). The catalysed reaction is [HPr protein]-O-phospho-L-serine + phosphate + H(+) = [HPr protein]-L-serine + diphosphate. Its function is as follows. Catalyzes the ATP- as well as the pyrophosphate-dependent phosphorylation of a specific serine residue in HPr, a phosphocarrier protein of the phosphoenolpyruvate-dependent sugar phosphotransferase system (PTS). HprK/P also catalyzes the pyrophosphate-producing, inorganic phosphate-dependent dephosphorylation (phosphorolysis) of seryl-phosphorylated HPr (P-Ser-HPr). The polypeptide is HPr kinase/phosphorylase (Cupriavidus necator (strain ATCC 17699 / DSM 428 / KCTC 22496 / NCIMB 10442 / H16 / Stanier 337) (Ralstonia eutropha)).